Reading from the N-terminus, the 639-residue chain is Protein P1 (639 aa).

An N-terminal signal peptide occupies residues 1–20 (MNRFTAYAALFFIFSLCSTA). 3 helical membrane passes run 121–141 (AASV…WTLA), 144–164 (ITLF…LGCI), and 172–192 (ALSL…KIIW). One can recognise a Peptidase S39 domain in the interval 207–399 (VEGYKGFSVP…GITSPNYVFE (193 aa)). Active-site for protease activity residues include histidine 255, aspartate 286, and serine 354. Disordered stretches follow at residues 456–510 (TNAP…AAIS) and 542–639 (VSQK…NSKA). Positions 463 to 487 (TAQTNSAEKTAPSTSAEKTAPTNKP) are enriched in polar residues. A compositionally biased stretch (basic residues) spans 551–561 (KQNKRGRRGGK). Positions 562 to 576 (NKQNNLPPTSTQSIS) are enriched in polar residues.

Belongs to the peptidase S39B family. In terms of processing, specific enzymatic cleavages in vivo yield mature proteins. The protease probably cleaves itself and releases the VPg protein. The VPg protein is probably further cleaved in its C-terminus.

It localises to the membrane. Its function is as follows. Precursor from which the VPg molecule is probably released at the onset of the RNA synthesis. Essential for virus replication. This chain is Protein P1, found in Solanum tuberosum (Potato).